The primary structure comprises 106 residues: UPF0060 membrane protein RHE_CH01408 (106 aa).

Helical transmembrane passes span 4 to 24 (IIYA…WAWL), 30 to 50 (AWWL…LTLV), 59 to 79 (FAAY…LIEG), and 86 to 106 (DIGG…APRA).

This sequence belongs to the UPF0060 family.

It localises to the cell inner membrane. This is UPF0060 membrane protein RHE_CH01408 from Rhizobium etli (strain ATCC 51251 / DSM 11541 / JCM 21823 / NBRC 15573 / CFN 42).